Here is a 278-residue protein sequence, read N- to C-terminus: Formamidopyrimidine-DNA glycosylase (278 aa).

Pro-2 (schiff-base intermediate with DNA) is an active-site residue. Catalysis depends on Glu-3, which acts as the Proton donor. Lys-58 functions as the Proton donor; for beta-elimination activity in the catalytic mechanism. The DNA site is built by His-91, Arg-109, and Arg-158. Residues 243 to 277 (KVYDRKGLPCKVCKTPISQMVQGQRTTYFCSQCQK) form an FPG-type zinc finger. Catalysis depends on Arg-267, which acts as the Proton donor; for delta-elimination activity.

Belongs to the FPG family. Monomer. It depends on Zn(2+) as a cofactor.

The enzyme catalyses Hydrolysis of DNA containing ring-opened 7-methylguanine residues, releasing 2,6-diamino-4-hydroxy-5-(N-methyl)formamidopyrimidine.. It carries out the reaction 2'-deoxyribonucleotide-(2'-deoxyribose 5'-phosphate)-2'-deoxyribonucleotide-DNA = a 3'-end 2'-deoxyribonucleotide-(2,3-dehydro-2,3-deoxyribose 5'-phosphate)-DNA + a 5'-end 5'-phospho-2'-deoxyribonucleoside-DNA + H(+). Functionally, involved in base excision repair of DNA damaged by oxidation or by mutagenic agents. Acts as a DNA glycosylase that recognizes and removes damaged bases. Has a preference for oxidized purines, such as 7,8-dihydro-8-oxoguanine (8-oxoG). Has AP (apurinic/apyrimidinic) lyase activity and introduces nicks in the DNA strand. Cleaves the DNA backbone by beta-delta elimination to generate a single-strand break at the site of the removed base with both 3'- and 5'-phosphates. The protein is Formamidopyrimidine-DNA glycosylase of Polynucleobacter necessarius subsp. necessarius (strain STIR1).